A 469-amino-acid chain; its full sequence is Uridine kinase-like protein 4 (469 aa).

The interval 46–249 (QRQPFVIGVA…IVQHICTKLG (204 aa)) is uridine kinase. The segment at 259–469 (NLYVIHSTFQ…GDRYFGTDDD (211 aa)) is uracil phosphoribosyltransferase. Residues Lys-283, Arg-292, and 326–329 (CKRL) contribute to the GTP site. 5-phospho-alpha-D-ribose 1-diphosphate-binding residues include Arg-336 and Arg-361. Arg-381 serves as a coordination point for GTP. 5-phospho-alpha-D-ribose 1-diphosphate-binding positions include Asp-387, 392–395 (TGNS), and Glu-458. A uracil-binding site is contributed by 457-459 (GEF).

This sequence in the N-terminal section; belongs to the uridine kinase family. The protein in the C-terminal section; belongs to the UPRTase family. It depends on Mg(2+) as a cofactor.

It carries out the reaction UMP + diphosphate = 5-phospho-alpha-D-ribose 1-diphosphate + uracil. The catalysed reaction is cytidine + ATP = CMP + ADP + H(+). It catalyses the reaction uridine + ATP = UMP + ADP + H(+). It participates in pyrimidine metabolism; UMP biosynthesis via salvage pathway; UMP from uracil: step 1/1. Its pathway is pyrimidine metabolism; CTP biosynthesis via salvage pathway; CTP from cytidine: step 1/3. It functions in the pathway pyrimidine metabolism; UMP biosynthesis via salvage pathway; UMP from uridine: step 1/1. With respect to regulation, allosterically activated by GTP. Functionally, involved in the pyrimidine salvage pathway. The uracil phosphoribosyltransferase (UPRT) activity, that catalyzes the conversion of uracil and 5-phospho-alpha-D-ribose 1-diphosphate (PRPP) to UMP and diphosphate, is unsure. This Arabidopsis thaliana (Mouse-ear cress) protein is Uridine kinase-like protein 4 (UKL4).